A 351-amino-acid chain; its full sequence is Protein arginine N-methyltransferase 1 (351 aa).

Residues 30 to 331 (KDYYFDSYAH…KNNRDLDFTV (302 aa)) form the SAM-dependent MTase PRMT-type domain. Residues H43, R52, G76, E98, and E127 each contribute to the S-adenosyl-L-methionine site. Residues E142 and E151 contribute to the active site.

This sequence belongs to the class I-like SAM-binding methyltransferase superfamily. Protein arginine N-methyltransferase family. As to quaternary structure, homodimer. Homooctamer; individual homodimers associates to form a homooctamer and homooligomerization is required for proper localization to the cell membrane. Individual homodimers can associate to form a homohexamer. Component of a complex with lsm14a/rap55a. Interacts with cirbp.

The protein localises to the nucleus. Its subcellular location is the nucleoplasm. The protein resides in the cytoplasm. It is found in the cytosol. The catalysed reaction is L-arginyl-[protein] + 2 S-adenosyl-L-methionine = N(omega),N(omega)-dimethyl-L-arginyl-[protein] + 2 S-adenosyl-L-homocysteine + 2 H(+). The enzyme catalyses L-arginyl-[protein] + S-adenosyl-L-methionine = N(omega)-methyl-L-arginyl-[protein] + S-adenosyl-L-homocysteine + H(+). It catalyses the reaction N(omega)-methyl-L-arginyl-[protein] + S-adenosyl-L-methionine = N(omega),N(omega)-dimethyl-L-arginyl-[protein] + S-adenosyl-L-homocysteine + H(+). Its function is as follows. Arginine methyltransferase that methylates (mono and asymmetric dimethylation) the guanidino nitrogens of arginyl residues present in target proteins. Constitutes the main enzyme that mediates monomethylation and asymmetric dimethylation of histone H4 'Arg-3' (H4R3me1 and H4R3me2a, respectively), a specific tag for epigenetic transcriptional activation. Methylates ilf3 to regulate its DNA-binding activity. Required for neural induction, playing a key role in the control of epidermal versus neural cell fate choice. Methylates cirbp to regulate its subcellular location. Acts transiently during metamorphosis as a transcription coactivator, enhancing thyroid hormone (T3) receptor (TR)-mediated transcription by enhancing TR binding to the T3 response element (TRE), and histone modification through recruitment of other coactivators. In Xenopus tropicalis (Western clawed frog), this protein is Protein arginine N-methyltransferase 1.